We begin with the raw amino-acid sequence, 376 residues long: Chaperone protein DnaJ (376 aa).

A J domain is found at 5–70; sequence DYYEILGVSK…QKRAAYDQYG (66 aa). A CR-type zinc finger spans residues 131–209; sequence GVTKEIRIPT…CHGHGRVERS (79 aa). Cys-144, Cys-147, Cys-161, Cys-164, Cys-183, Cys-186, Cys-197, and Cys-200 together coordinate Zn(2+). CXXCXGXG motif repeat units lie at residues 144-151, 161-168, 183-190, and 197-204; these read CDVCHGSG, CPTCHGSG, CPHCQGRG, and CNKCHGHG.

It belongs to the DnaJ family. Homodimer. Zn(2+) serves as cofactor.

The protein resides in the cytoplasm. Functionally, participates actively in the response to hyperosmotic and heat shock by preventing the aggregation of stress-denatured proteins and by disaggregating proteins, also in an autonomous, DnaK-independent fashion. Unfolded proteins bind initially to DnaJ; upon interaction with the DnaJ-bound protein, DnaK hydrolyzes its bound ATP, resulting in the formation of a stable complex. GrpE releases ADP from DnaK; ATP binding to DnaK triggers the release of the substrate protein, thus completing the reaction cycle. Several rounds of ATP-dependent interactions between DnaJ, DnaK and GrpE are required for fully efficient folding. Also involved, together with DnaK and GrpE, in the DNA replication of plasmids through activation of initiation proteins. This chain is Chaperone protein DnaJ, found in Escherichia fergusonii (strain ATCC 35469 / DSM 13698 / CCUG 18766 / IAM 14443 / JCM 21226 / LMG 7866 / NBRC 102419 / NCTC 12128 / CDC 0568-73).